A 103-amino-acid chain; its full sequence is Small ribosomal subunit protein uS10 (103 aa).

This sequence belongs to the universal ribosomal protein uS10 family. In terms of assembly, part of the 30S ribosomal subunit.

Its function is as follows. Involved in the binding of tRNA to the ribosomes. The chain is Small ribosomal subunit protein uS10 from Chlorobaculum tepidum (strain ATCC 49652 / DSM 12025 / NBRC 103806 / TLS) (Chlorobium tepidum).